A 371-amino-acid polypeptide reads, in one-letter code: 4-hydroxy-3-methylbut-2-en-1-yl diphosphate synthase (flavodoxin) (371 aa).

[4Fe-4S] cluster is bound by residues C270, C273, C305, and E312.

It belongs to the IspG family. [4Fe-4S] cluster is required as a cofactor.

The enzyme catalyses (2E)-4-hydroxy-3-methylbut-2-enyl diphosphate + oxidized [flavodoxin] + H2O + 2 H(+) = 2-C-methyl-D-erythritol 2,4-cyclic diphosphate + reduced [flavodoxin]. Its pathway is isoprenoid biosynthesis; isopentenyl diphosphate biosynthesis via DXP pathway; isopentenyl diphosphate from 1-deoxy-D-xylulose 5-phosphate: step 5/6. Functionally, converts 2C-methyl-D-erythritol 2,4-cyclodiphosphate (ME-2,4cPP) into 1-hydroxy-2-methyl-2-(E)-butenyl 4-diphosphate. This Shewanella halifaxensis (strain HAW-EB4) protein is 4-hydroxy-3-methylbut-2-en-1-yl diphosphate synthase (flavodoxin).